Reading from the N-terminus, the 182-residue chain is Thioredoxin F-type, chloroplastic (182 aa).

The transit peptide at 1–69 (MALNLCTSPK…SVRSSLETAG (69 aa)) directs the protein to the chloroplast. The Thioredoxin domain occupies 70–181 (PTVTVGKVTE…LVAAIDTVRS (112 aa)). Active-site nucleophile residues include C106 and C109. C106 and C109 form a disulfide bridge.

This sequence belongs to the thioredoxin family. Plant F-type subfamily. In terms of assembly, forms a complex with heterodimeric ferredoxin-thioredoxin reductase (FTR) and ferredoxin.

It localises to the plastid. The protein resides in the chloroplast. Its function is as follows. Participates in various redox reactions through the reversible oxidation of the active center dithiol to a disulfide. The F form is known to activate a number of enzymes of the photosynthetic carbon cycle. The polypeptide is Thioredoxin F-type, chloroplastic (Pisum sativum (Garden pea)).